A 670-amino-acid polypeptide reads, in one-letter code: Microtubule-associated protein ssm4 (670 aa).

The CAP-Gly domain maps to 23-65 (GSTDFESGIWLGVELLNGKGKNDGSVKGKRYFSCEKGKGIFVR). 2 coiled-coil regions span residues 209 to 254 (KSEL…KNSI) and 404 to 582 (VKTR…KLAD). Ser460 bears the Phosphoserine mark. Thr606 carries the phosphothreonine modification.

The protein localises to the cytoplasm. The protein resides in the cytoskeleton. It localises to the spindle. Its function is as follows. Binds to nuclear microtubules with the effect of either modifying their structure or function. This then promotes meiotic nuclear division. This chain is Microtubule-associated protein ssm4 (ssm4), found in Schizosaccharomyces pombe (strain 972 / ATCC 24843) (Fission yeast).